The chain runs to 427 residues: Enolase (427 aa).

Residue Gln163 participates in (2R)-2-phosphoglycerate binding. Glu205 functions as the Proton donor in the catalytic mechanism. Mg(2+) contacts are provided by Asp242, Glu285, and Asp312. Residues Lys337, Arg366, Ser367, and Lys388 each coordinate (2R)-2-phosphoglycerate. Catalysis depends on Lys337, which acts as the Proton acceptor.

This sequence belongs to the enolase family. The cofactor is Mg(2+).

The protein resides in the cytoplasm. Its subcellular location is the secreted. The protein localises to the cell surface. It carries out the reaction (2R)-2-phosphoglycerate = phosphoenolpyruvate + H2O. The protein operates within carbohydrate degradation; glycolysis; pyruvate from D-glyceraldehyde 3-phosphate: step 4/5. Its function is as follows. Catalyzes the reversible conversion of 2-phosphoglycerate (2-PG) into phosphoenolpyruvate (PEP). It is essential for the degradation of carbohydrates via glycolysis. This Ralstonia nicotianae (strain ATCC BAA-1114 / GMI1000) (Ralstonia solanacearum) protein is Enolase.